The sequence spans 100 residues: UPF0213 protein YhbQ (100 aa).

The GIY-YIG domain maps to 2–77; the sequence is TPWYLYLIRT…KQLTKRQKER (76 aa).

Belongs to the UPF0213 family.

In Salmonella choleraesuis (strain SC-B67), this protein is UPF0213 protein YhbQ.